The chain runs to 58 residues: MQKFMRLFFLGLFFILFMTTQIKADGCLTYDSLCSTMYDKCCTSMKCKGFFFGYCKSI.

Positions 1–24 are cleaved as a signal peptide; sequence MQKFMRLFFLGLFFILFMTTQIKA. 3 cysteine pairs are disulfide-bonded: C27-C42, C34-C47, and C41-C55.

As to expression, abundantly expressed by teratocytes, which are extra-embryonic cells released by parasitoid wasps into their hosts during larval eclosion.

Its subcellular location is the secreted. In terms of biological role, this endoparasitoid wasp peptide has immununosuppressive and insecticidal activities. Suppress cellular immunity which is detectable as a reduction of hemocyte encapsulation in the host. In vivo, ingestion of this peptide (probably at excessive doses) increases larval mortality and reduces leaf consumption in both lepidopteran species D.saccharalis and S.frugiperda, which are permissive and non-permissive hosts for C.flavipes, respectively. In Cotesia flavipes (Parasitic wasp), this protein is Teratocyte protein CftICK-III.